We begin with the raw amino-acid sequence, 177 residues long: Large ribosomal subunit protein uL6 (177 aa).

Belongs to the universal ribosomal protein uL6 family. Part of the 50S ribosomal subunit.

Functionally, this protein binds to the 23S rRNA, and is important in its secondary structure. It is located near the subunit interface in the base of the L7/L12 stalk, and near the tRNA binding site of the peptidyltransferase center. The polypeptide is Large ribosomal subunit protein uL6 (Mesorhizobium japonicum (strain LMG 29417 / CECT 9101 / MAFF 303099) (Mesorhizobium loti (strain MAFF 303099))).